The chain runs to 447 residues: C4-dicarboxylate transport protein (447 aa).

The next 8 membrane-spanning stretches (helical) occupy residues 19–39 (ILYV…HFYP), 55–75 (LVKM…IAGL), 90–110 (IYFL…ANVV), 155–175 (AFAS…GIAL), 199–219 (LVAI…AFTI), 232–252 (MLVG…LGLV), 343–363 (LLLV…AGFI), and 366–386 (AATL…ILGV).

This sequence belongs to the dicarboxylate/amino acid:cation symporter (DAACS) (TC 2.A.23) family.

It localises to the cell inner membrane. Functionally, responsible for the transport of dicarboxylates such as succinate, fumarate, and malate from the periplasm across the membrane. The sequence is that of C4-dicarboxylate transport protein from Rhodospirillum rubrum (strain ATCC 11170 / ATH 1.1.1 / DSM 467 / LMG 4362 / NCIMB 8255 / S1).